A 546-amino-acid chain; its full sequence is Zinc finger and BTB domain-containing protein 7A (546 aa).

The region spanning 34–101 (CDVVILVEGQ…AYTATLTVST (68 aa)) is the BTB domain. The segment at 189–288 (QEDEEEPDCN…SFVPTGAEAE (100 aa)) is disordered. C2H2-type zinc fingers lie at residues 359–381 (QKCPICAKVIQGAGKLPRHIRTH), 387–409 (YECNICNVRFTRQDKLKVHMRKH), and 415–437 (YLCQQCGAAFAHNYDLKNHMRVH). A C2H2-type 4; atypical zinc finger spans residues 443 to 467 (YQCDSCFKTFVRSDHLHRHLKKDGC). The interval 463–546 (KKDGCNGIPS…AAEGSAPGPS (84 aa)) is disordered. Over residues 534–546 (AGGAAEGSAPGPS) the composition is skewed to low complexity.

It is found in the nucleus. Its function is as follows. Transcription factor that represses the transcription of a wide range of genes involved in cell proliferation and differentiation. Directly and specifically binds to the consensus sequence 5'-[GA][CA]GACCCCCCCCC-3' and represses transcription both by regulating the organization of chromatin and through the direct recruitment of transcription factors to gene regulatory regions. May also play a role, independently of its transcriptional activity, in double-strand break repair via classical non-homologous end joining/cNHEJ and in alternative splicing. This is Zinc finger and BTB domain-containing protein 7A from Gallus gallus (Chicken).